Consider the following 761-residue polypeptide: Semaphorin-4A (761 aa).

An N-terminal signal peptide occupies residues 1-32 (MALPALGLDPWSLLGLFLFQLLQLLLPTTTAG). Topologically, residues 33-683 (GGGQGPMPRV…LAAQQSYWPH (651 aa)) are extracellular. Residues 36-494 (QGPMPRVRYY…FSGGVWRVPR (459 aa)) form the Sema domain. Residues Cys113 and Cys124 are joined by a disulfide bond. 2 N-linked (GlcNAc...) asparagine glycosylation sites follow: Asn120 and Asn135. Intrachain disulfides connect Cys142–Cys151, Cys269–Cys379, and Cys293–Cys339. Asn496 carries N-linked (GlcNAc...) asparagine glycosylation. Residues 496 to 548 (NCSVYESCVDCVLARDPHCAWDPESRTCCLLSAPNLNSWKQDMERGNPEWACA) form the PSI domain. Intrachain disulfides connect Cys497–Cys514, Cys506–Cys523, and Cys580–Cys624. The Ig-like C2-type domain occupies 573 to 631 (NSILELPCPHLSALASYYWSHGPAAVPEASSTVYNGSLLLIVQDGVGGLYQCWATENGF). An N-linked (GlcNAc...) asparagine glycan is attached at Asn607. Residues 684-704 (FVTVTVLFALVLSGALIILVA) form a helical membrane-spanning segment. The Cytoplasmic segment spans residues 705–761 (SPLRALRARGKVQGCETLRPGEKAPLSREQHLQSPKECRTSASDVDADNNCLGTEVA). The interval 722-749 (LRPGEKAPLSREQHLQSPKECRTSASDV) is disordered. Basic and acidic residues predominate over residues 723–743 (RPGEKAPLSREQHLQSPKECR).

Belongs to the semaphorin family. As to quaternary structure, interacts with PLXNB1, PLXNB2, PLXNB3, PLXND1 and TIMD2.

It is found in the cell membrane. Cell surface receptor for PLXNB1, PLXNB2, PLXNB3 and PLXND1 that plays an important role in cell-cell signaling. Regulates glutamatergic and GABAergic synapse development. Promotes the development of inhibitory synapses in a PLXNB1-dependent manner and promotes the development of excitatory synapses in a PLXNB2-dependent manner. Plays a role in priming antigen-specific T-cells, promotes differentiation of Th1 T-helper cells, and thereby contributes to adaptive immunity. Promotes phosphorylation of TIMD2. Inhibits angiogenesis. Promotes axon growth cone collapse. Inhibits axonal extension by providing local signals to specify territories inaccessible for growing axons. This chain is Semaphorin-4A (SEMA4A), found in Homo sapiens (Human).